The chain runs to 430 residues: MKNLKINFISLGCPKNLVDTEVLIGKLNQENISFTANPEEADVILINTCGFIEPAKEESIETILEAVKLKQNSNKKIIVTGCLVERYKQELEKEIPEVDYFIDLKNQSQIPVLFDIKPKENTKRIISTPKHTAYLKISEGCDHTCSFCAIPNIRGKHRSKPIEALVEEAKYLANLGVKELNIVSQDTSYYGYDLYGKPMLFELLQHLEKIDGIKWIRLYYLYPSTVDEDFFKFIKGSEKILHYIEMPIQHSEDKILKDMMRGYRKKKLYQILEWKEKYTPDMTIRSSVIVGYPTETEEDFENMKNFIQEAQFDWLGVFVYSHEEGTPAYQKHKDKIPKKEKIRRLNEISALQENITEQKNKSLIGKELDIIIDGFSEEWETLPIGRSYRSAFEIDGAVYVETTEPVNVGDIIKVRIKDTIDKYDVVGEAE.

The MTTase N-terminal domain maps to 4–119; that stretch reads LKINFISLGC…IPVLFDIKPK (116 aa). [4Fe-4S] cluster is bound by residues C13, C49, C82, C141, C145, and C148. The Radical SAM core domain occupies 127–358; it reads STPKHTAYLK…SALQENITEQ (232 aa). One can recognise a TRAM domain in the interval 361-430; that stretch reads KSLIGKELDI…DKYDVVGEAE (70 aa).

It belongs to the methylthiotransferase family. RimO subfamily. It depends on [4Fe-4S] cluster as a cofactor.

It is found in the cytoplasm. It carries out the reaction L-aspartate(89)-[ribosomal protein uS12]-hydrogen + (sulfur carrier)-SH + AH2 + 2 S-adenosyl-L-methionine = 3-methylsulfanyl-L-aspartate(89)-[ribosomal protein uS12]-hydrogen + (sulfur carrier)-H + 5'-deoxyadenosine + L-methionine + A + S-adenosyl-L-homocysteine + 2 H(+). Functionally, catalyzes the methylthiolation of an aspartic acid residue of ribosomal protein uS12. In Sulfurihydrogenibium sp. (strain YO3AOP1), this protein is Ribosomal protein uS12 methylthiotransferase RimO.